Reading from the N-terminus, the 469-residue chain is Adenosylhomocysteinase (469 aa).

T63, D139, and E164 together coordinate substrate. 165–167 (TTT) serves as a coordination point for NAD(+). Positions 194 and 198 each coordinate substrate. NAD(+)-binding positions include N199, 228 to 233 (GYGDVG), E251, N300, 321 to 323 (IGH), and N375.

The protein belongs to the adenosylhomocysteinase family. It depends on NAD(+) as a cofactor.

It is found in the cytoplasm. It carries out the reaction S-adenosyl-L-homocysteine + H2O = L-homocysteine + adenosine. It functions in the pathway amino-acid biosynthesis; L-homocysteine biosynthesis; L-homocysteine from S-adenosyl-L-homocysteine: step 1/1. In terms of biological role, may play a key role in the regulation of the intracellular concentration of adenosylhomocysteine. The protein is Adenosylhomocysteinase of Pseudomonas fluorescens (strain ATCC BAA-477 / NRRL B-23932 / Pf-5).